A 583-amino-acid chain; its full sequence is Kelch-like protein 38 (583 aa).

The BTB domain maps to 34–101 (TDVILCTEDK…IYTGSITITM (68 aa)). A BACK domain is found at 136–237 (CLSMIRLSEI…HPTYLFQFIA (102 aa)). Kelch repeat units lie at residues 285–332 (TLVV…CIHS), 333–385 (ILYV…SYLH), 386–433 (FIFA…ANDQ), 435–481 (IYVF…VIED), 482–523 (KIYI…VINN), and 525–575 (LYVT…PLIC).

In Danio rerio (Zebrafish), this protein is Kelch-like protein 38 (klhl38).